Here is a 478-residue protein sequence, read N- to C-terminus: Aspartyl/glutamyl-tRNA(Asn/Gln) amidotransferase subunit B (478 aa).

The protein belongs to the GatB/GatE family. GatB subfamily. Heterotrimer of A, B and C subunits.

It carries out the reaction L-glutamyl-tRNA(Gln) + L-glutamine + ATP + H2O = L-glutaminyl-tRNA(Gln) + L-glutamate + ADP + phosphate + H(+). The enzyme catalyses L-aspartyl-tRNA(Asn) + L-glutamine + ATP + H2O = L-asparaginyl-tRNA(Asn) + L-glutamate + ADP + phosphate + 2 H(+). Its function is as follows. Allows the formation of correctly charged Asn-tRNA(Asn) or Gln-tRNA(Gln) through the transamidation of misacylated Asp-tRNA(Asn) or Glu-tRNA(Gln) in organisms which lack either or both of asparaginyl-tRNA or glutaminyl-tRNA synthetases. The reaction takes place in the presence of glutamine and ATP through an activated phospho-Asp-tRNA(Asn) or phospho-Glu-tRNA(Gln). In Syntrophotalea carbinolica (strain DSM 2380 / NBRC 103641 / GraBd1) (Pelobacter carbinolicus), this protein is Aspartyl/glutamyl-tRNA(Asn/Gln) amidotransferase subunit B.